Reading from the N-terminus, the 91-residue chain is Non-hemolytic enterotoxin 105 kDa component (91 aa).

It depends on Zn(2+) as a cofactor.

It is found in the secreted. This protein is a metalloprotease with gelatinolytic and collagenolytic activity and is a component of the non-hemolytic enterotoxin complex (NHE). The chain is Non-hemolytic enterotoxin 105 kDa component from Bacillus cereus.